The primary structure comprises 132 residues: Small ribosomal subunit protein uS8 (132 aa).

It belongs to the universal ribosomal protein uS8 family. In terms of assembly, part of the 30S ribosomal subunit. Contacts proteins S5 and S12.

One of the primary rRNA binding proteins, it binds directly to 16S rRNA central domain where it helps coordinate assembly of the platform of the 30S subunit. The chain is Small ribosomal subunit protein uS8 from Stenotrophomonas maltophilia (strain K279a).